We begin with the raw amino-acid sequence, 446 residues long: Glutamate--tRNA ligase (446 aa).

A 'HIGH' region motif is present at residues 9–19 (PSPTGLLHVGN). Positions 240 to 244 (GLSKR) match the 'KMSKS' region motif. Lysine 243 contributes to the ATP binding site.

Belongs to the class-I aminoacyl-tRNA synthetase family. Glutamate--tRNA ligase type 1 subfamily. As to quaternary structure, monomer.

Its subcellular location is the cytoplasm. The catalysed reaction is tRNA(Glu) + L-glutamate + ATP = L-glutamyl-tRNA(Glu) + AMP + diphosphate. Catalyzes the attachment of glutamate to tRNA(Glu) in a two-step reaction: glutamate is first activated by ATP to form Glu-AMP and then transferred to the acceptor end of tRNA(Glu). The sequence is that of Glutamate--tRNA ligase from Azospirillum brasilense.